A 479-amino-acid chain; its full sequence is Ribulose bisphosphate carboxylase large chain (479 aa).

Residues 1 to 2 (MS) constitute a propeptide that is removed on maturation. Residues Asn-123 and Thr-173 each coordinate substrate. The active-site Proton acceptor is Lys-175. Lys-177 serves as a coordination point for substrate. Mg(2+)-binding residues include Lys-201, Asp-203, and Glu-204. Lys-201 bears the N6-carboxylysine mark. Residue Ser-208 is modified to Phosphoserine. His-294 acts as the Proton acceptor in catalysis. Substrate-binding residues include Arg-295 and His-327. A Phosphothreonine modification is found at Thr-330. Residue Ser-379 participates in substrate binding.

The protein belongs to the RuBisCO large chain family. Type I subfamily. In terms of assembly, heterohexadecamer of 8 large chains and 8 small chains; disulfide-linked. The disulfide link is formed within the large subunit homodimers. Requires Mg(2+) as cofactor. The disulfide bond which can form in the large chain dimeric partners within the hexadecamer appears to be associated with oxidative stress and protein turnover.

It localises to the plastid. The protein resides in the chloroplast. The catalysed reaction is 2 (2R)-3-phosphoglycerate + 2 H(+) = D-ribulose 1,5-bisphosphate + CO2 + H2O. It carries out the reaction D-ribulose 1,5-bisphosphate + O2 = 2-phosphoglycolate + (2R)-3-phosphoglycerate + 2 H(+). RuBisCO catalyzes two reactions: the carboxylation of D-ribulose 1,5-bisphosphate, the primary event in carbon dioxide fixation, as well as the oxidative fragmentation of the pentose substrate in the photorespiration process. Both reactions occur simultaneously and in competition at the same active site. The sequence is that of Ribulose bisphosphate carboxylase large chain from Crucihimalaya wallichii (Rock-cress).